The sequence spans 252 residues: Carbohydrate deacetylase (252 aa).

The Mg(2+) site is built by H59 and H122.

This sequence belongs to the YdjC deacetylase family. In terms of assembly, homodimer. Requires Mg(2+) as cofactor.

Functionally, probably catalyzes the deacetylation of acetylated carbohydrates an important step in the degradation of oligosaccharides. This chain is Carbohydrate deacetylase, found in Vibrio vulnificus (strain YJ016).